The following is a 533-amino-acid chain: Beta-1,4 N-acetylgalactosaminyltransferase 1 (533 aa).

Over 1 to 7 (MWLGRRA) the chain is Cytoplasmic. A helical; Signal-anchor for type II membrane protein transmembrane segment spans residues 8 to 25 (LCALVLLLACASLGLLYA). The Lumenal portion of the chain corresponds to 26 to 533 (STRDAPGLRL…KHRLQCMTSQ (508 aa)). Residues Asn-79, Asn-179, and Asn-274 are each glycosylated (N-linked (GlcNAc...) asparagine). A disulfide bond links Cys-429 and Cys-476.

Belongs to the glycosyltransferase 2 family. In terms of assembly, homodimer; disulfide-linked.

It localises to the golgi apparatus membrane. It carries out the reaction a ganglioside GM3 (d18:1(4E)) + UDP-N-acetyl-alpha-D-galactosamine = a ganglioside GM2 (d18:1(4E)) + UDP + H(+). The catalysed reaction is a ganglioside GM3 + UDP-N-acetyl-alpha-D-galactosamine = a ganglioside GM2 + UDP + H(+). The enzyme catalyses a ganglioside GD3 + UDP-N-acetyl-alpha-D-galactosamine = a ganglioside GD2 + UDP + H(+). It catalyses the reaction a ganglioside GD3 (d18:1(4E)) + UDP-N-acetyl-alpha-D-galactosamine = a ganglioside GD2 (d18:1(4E)) + UDP + H(+). It carries out the reaction a beta-D-Gal-(1-&gt;4)-beta-D-Glc-(1&lt;-&gt;1)-Cer(d18:1(4E)) + UDP-N-acetyl-alpha-D-galactosamine = a ganglioside GA2 (d18:1(4E)) + UDP + H(+). The catalysed reaction is a ganglioside GD1a + UDP-N-acetyl-alpha-D-galactosamine = a ganglioside GalNAc-GD1a + UDP + H(+). The enzyme catalyses a ganglioside GT3 (d18:1(4E)) + UDP-N-acetyl-alpha-D-galactosamine = a ganglioside GT2 (d18:1(4E)) + UDP + H(+). It catalyses the reaction a beta-D-galactosyl-(1-&gt;4)-beta-D-glucosyl-(1&lt;-&gt;1)-ceramide + UDP-N-acetyl-alpha-D-galactosamine = a ganglioside GA2 + UDP + H(+). It carries out the reaction a neolactoside IV(3)-alpha-NeuGc-nLc4Cer + UDP-N-acetyl-alpha-D-galactosamine = a neolactoside IV(4)-beta-GalNAc-IV(3)-alpha-NeuGc-nLc4Cer + UDP + H(+). Its pathway is sphingolipid metabolism. In terms of biological role, involved in the biosynthesis of gangliosides GM2, GD2, GT2 and GA2 from GM3, GD3, GT3 and GA3, respectively. The protein is Beta-1,4 N-acetylgalactosaminyltransferase 1 of Homo sapiens (Human).